We begin with the raw amino-acid sequence, 223 residues long: Deoxyribose-phosphate aldolase (223 aa).

The active-site Proton donor/acceptor is D89. Residue K152 is the Schiff-base intermediate with acetaldehyde of the active site. K181 (proton donor/acceptor) is an active-site residue.

The protein belongs to the DeoC/FbaB aldolase family. DeoC type 1 subfamily.

It is found in the cytoplasm. The enzyme catalyses 2-deoxy-D-ribose 5-phosphate = D-glyceraldehyde 3-phosphate + acetaldehyde. Its pathway is carbohydrate degradation; 2-deoxy-D-ribose 1-phosphate degradation; D-glyceraldehyde 3-phosphate and acetaldehyde from 2-deoxy-alpha-D-ribose 1-phosphate: step 2/2. In terms of biological role, catalyzes a reversible aldol reaction between acetaldehyde and D-glyceraldehyde 3-phosphate to generate 2-deoxy-D-ribose 5-phosphate. In Listeria monocytogenes serotype 4b (strain F2365), this protein is Deoxyribose-phosphate aldolase.